We begin with the raw amino-acid sequence, 162 residues long: Endoribonuclease YbeY (162 aa).

Residues His-128, His-132, and His-138 each contribute to the Zn(2+) site.

The protein belongs to the endoribonuclease YbeY family. Requires Zn(2+) as cofactor.

Its subcellular location is the cytoplasm. In terms of biological role, single strand-specific metallo-endoribonuclease involved in late-stage 70S ribosome quality control and in maturation of the 3' terminus of the 16S rRNA. This chain is Endoribonuclease YbeY, found in Levilactobacillus brevis (strain ATCC 367 / BCRC 12310 / CIP 105137 / JCM 1170 / LMG 11437 / NCIMB 947 / NCTC 947) (Lactobacillus brevis).